A 166-amino-acid chain; its full sequence is Lipoprotein signal peptidase (166 aa).

Helical transmembrane passes span 10-30 (GGAL…DQLT), 32-52 (IAVL…FFNL), 71-91 (WQRW…CYLL), and 100-120 (FSLS…DRLI). Active-site residues include Asp-126 and Asp-144. The helical transmembrane segment at 135–155 (WHWPAFNLADSAITVGAVLLI) threads the bilayer.

Belongs to the peptidase A8 family.

It localises to the cell inner membrane. The enzyme catalyses Release of signal peptides from bacterial membrane prolipoproteins. Hydrolyzes -Xaa-Yaa-Zaa-|-(S,diacylglyceryl)Cys-, in which Xaa is hydrophobic (preferably Leu), and Yaa (Ala or Ser) and Zaa (Gly or Ala) have small, neutral side chains.. It participates in protein modification; lipoprotein biosynthesis (signal peptide cleavage). This protein specifically catalyzes the removal of signal peptides from prolipoproteins. The sequence is that of Lipoprotein signal peptidase from Burkholderia mallei (strain ATCC 23344).